Here is a 287-residue protein sequence, read N- to C-terminus: Short-chain dehydrogenase virD (287 aa).

Residues Val-10, Thr-36, Asp-57, Asn-85, Tyr-149, Lys-153, Val-182, and Thr-184 each contribute to the NADP(+) site. Catalysis depends on Tyr-149, which acts as the Proton acceptor. Lys-153 functions as the Lowers pKa of active site Tyr in the catalytic mechanism.

It belongs to the short-chain dehydrogenases/reductases (SDR) family.

It participates in secondary metabolite biosynthesis. In terms of biological role, short-chain dehydrogenase; part of the gene cluster that mediates the biosynthesis of virensols and trichoxide, fungal natural products that contain or are derived from a salicylaldehyde core. The pathway begins with the synthesis of the reduced chain in virensol C by the highly reducing polyketide synthase virA via condensation of one acetate and 8 malonate units. VirA has interesting programming rules since the first 2 ketides are fully reduced, the 3 following ketides undergo beta-dehydration, and the last 3 ketides are only reduced to beta-hydroxys to yield the trihydroxy portion. The production of aldehyde virensol C by virA alone is surprising, since virA does not contain a reductase (R) domain that is typically associated with reductive product release in HRPKS. The cupin-domain enzyme virC is involved in enhancing virA product turnover. The short-chain dehydrogenase virB then oxidizes the C-7 alcohol of virensol C to a ketone, yielding virensol D. Virensol D is further transformed to salicylaldehyde 5-deoxyaurocitrin by the short-chain dehydrogenase virD. VirD catalyzes the dehydrogenation of C-3 to form the beta-ketone aldehyde, which is followed by the generation of the nucleophilic C-2 that is required for the intramolecular aldol condensation between C-2 and C-7, itself followed by dehydration and aromatization which leads to salicylaldehyde 5-deoxyaurocitrin. While the dehydrogenation of virensol D is definitely catalyzed by virD, the aldol condensation and dehydration may be uncatalyzed or assisted by virD. The short chain dehydrogenase virG then converts salicylaldehyde 5-deoxyaurocitrin into virensol B which is further hydroxylated by the cytochrome P450 monooxygenase virE to yield the hydroquinone virensol A. VirI then may oxidize virensol A to form the quinone, while virH performs the epoxidation. Finally, the two remaining short-chain dehydrogenases, virK and virL, are probably responsible for reducing the ketones to the corresponding alcohols to furnish the epoxycyclohexanol structure in trichoxide. The polypeptide is Short-chain dehydrogenase virD (Hypocrea virens (strain Gv29-8 / FGSC 10586) (Gliocladium virens)).